The chain runs to 62 residues: Large ribosomal subunit protein bL32 (62 aa).

Over residues 1-16 (MAVPKRKTSPSRRGMR) the composition is skewed to basic residues. The disordered stretch occupies residues 1–44 (MAVPKRKTSPSRRGMRRSADALKAPTYVEDKDSGELRRPHHIDL). Over residues 28–44 (VEDKDSGELRRPHHIDL) the composition is skewed to basic and acidic residues.

This sequence belongs to the bacterial ribosomal protein bL32 family.

This chain is Large ribosomal subunit protein bL32, found in Methylorubrum extorquens (strain CM4 / NCIMB 13688) (Methylobacterium extorquens).